We begin with the raw amino-acid sequence, 357 residues long: Arginine kinase (357 aa).

Ala-2 carries the N-acetylalanine modification. The 83-residue stretch at 9-91 (KLEEGFKKLE…FDPIIEDYHK (83 aa)) folds into the Phosphagen kinase N-terminal domain. 64-68 (GVGVY) is an L-arginine binding site. The region spanning 119–356 (FVISTRVRCG…LELIKIEKEM (238 aa)) is the Phosphagen kinase C-terminal domain. Residues 122–126 (STRVR) and His-185 contribute to the ATP site. Position 225 (Glu-225) interacts with L-arginine. ATP is bound at residue Arg-229. Cys-271 provides a ligand contact to L-arginine. Residues 280 to 284 (RASVH) and 309 to 314 (RGTRGE) each bind ATP. An L-arginine-binding site is contributed by Glu-314.

Belongs to the ATP:guanido phosphotransferase family.

The catalysed reaction is L-arginine + ATP = N(omega)-phospho-L-arginine + ADP + H(+). The protein is Arginine kinase of Carcinus maenas (Common shore crab).